Here is an 847-residue protein sequence, read N- to C-terminus: Zinc transporter ZIP10 (847 aa).

Positions 1 to 26 are cleaved as a signal peptide; the sequence is MMRVHTHTRLCFLCVLTLLYHQCSHC. The disordered stretch occupies residues 136–374; sequence GRHSHSAGHP…RREVPGSPAH (239 aa). A compositionally biased stretch (basic and acidic residues) spans 162-171; that stretch reads HHENEEHTLA. The span at 179–188 shows a compositional bias: polar residues; the sequence is TLGTGATPPS. A compositionally biased stretch (basic and acidic residues) spans 190–269; the sequence is SEEHDHDHEH…QEHNDLSDQN (80 aa). Basic residues-rich tracts occupy residues 270–285 and 314–330; these read HHHHDHHHHKHPHPHL and TRRHRRPSKVKAHRGRN. Asn385 is a glycosylation site (N-linked (GlcNAc...) asparagine). 3 consecutive transmembrane segments (helical) span residues 447-467, 474-494, and 529-549; these read FVSITIISLLSLLGVVLVPIL, FLLTFLVALAVGTLSGDALLH, and GLTALAGIYLLFIIEHCIGMF. The disordered stretch occupies residues 613–676; it reads ELQPLDSPSK…HSHHGHCHSD (64 aa). Over residues 629–646 the composition is skewed to basic and acidic residues; it reads DSDHPYEAPVKTEEDNVP. A compositionally biased stretch (basic residues) spans 648-672; the sequence is AKSKKHGHGHGHGHGHGHGHSHHGH. 4 helical membrane-spanning segments follow: residues 705–725, 750–770, 779–799, and 817–837; these read AIGAAFSANITGGISTSVAVF, IVYNLLSALMAYAGMVIGTAV, SWIFAVTAGMFLYVALVDMLP, and FVLQNFGMLTGFGIMLLIAIF.

The protein belongs to the ZIP transporter (TC 2.A.5) family. Undergoes N-terminal ectodomain shedding.

It localises to the cell membrane. It is found in the apical cell membrane. It catalyses the reaction Zn(2+)(in) = Zn(2+)(out). In terms of biological role, zinc-influx transporter. When associated with slc39a6, the heterodimer slc39a10/slc39a6 has a functional role in epithelial-mesenchymal transition (EMT) during embryonic development. Slc39a10/slc39a6 heterodimers play also an essentiel role in initiating mitosis by importing zinc into cells to initiate a pathway resulting in the onset of mitosis. When associated with slc39a6, the heterodimer controls Ncam1 phosphorylation and integration into focal adhesion complexes during EMT. The protein is Zinc transporter ZIP10 of Danio rerio (Zebrafish).